A 173-amino-acid chain; its full sequence is dCTP deaminase, dUMP-forming (173 aa).

Residues 93 to 98 (RSSTGR), aspartate 111, 119 to 121 (TLE), glutamine 138, and tyrosine 151 contribute to the dCTP site. Glutamate 121 acts as the Proton donor/acceptor in catalysis.

This sequence belongs to the dCTP deaminase family. As to quaternary structure, homotrimer.

The catalysed reaction is dCTP + 2 H2O = dUMP + NH4(+) + diphosphate. Its pathway is pyrimidine metabolism; dUMP biosynthesis; dUMP from dCTP: step 1/1. In terms of biological role, bifunctional enzyme that catalyzes both the deamination of dCTP to dUTP and the hydrolysis of dUTP to dUMP without releasing the toxic dUTP intermediate. The sequence is that of dCTP deaminase, dUMP-forming from Clostridium botulinum (strain Eklund 17B / Type B).